Reading from the N-terminus, the 216-residue chain is Probable phosphatase SPAC513.02 (216 aa).

The active-site Tele-phosphohistidine intermediate is the His15.

Belongs to the phosphoglycerate mutase family. BPG-dependent PGAM subfamily.

The protein resides in the cytoplasm. It is found in the nucleus. The chain is Probable phosphatase SPAC513.02 from Schizosaccharomyces pombe (strain 972 / ATCC 24843) (Fission yeast).